The primary structure comprises 35 residues: Photosystem II reaction center protein T (35 aa).

Residues 3–23 (SVAYILILTLAIGVLFFAIAF) form a helical membrane-spanning segment.

Belongs to the PsbT family. In terms of assembly, PSII is composed of 1 copy each of membrane proteins PsbA, PsbB, PsbC, PsbD, PsbE, PsbF, PsbH, PsbI, PsbJ, PsbK, PsbL, PsbM, PsbT, PsbX, PsbY, PsbZ, Psb30/Ycf12, peripheral proteins PsbO, CyanoQ (PsbQ), PsbU, PsbV and a large number of cofactors. It forms dimeric complexes.

The protein resides in the cellular thylakoid membrane. Found at the monomer-monomer interface of the photosystem II (PS II) dimer, plays a role in assembly and dimerization of PSII. PSII is a light-driven water plastoquinone oxidoreductase, using light energy to abstract electrons from H(2)O, generating a proton gradient subsequently used for ATP formation. The sequence is that of Photosystem II reaction center protein T from Nostoc sp. (strain PCC 7120 / SAG 25.82 / UTEX 2576).